A 531-amino-acid chain; its full sequence is NADH-quinone oxidoreductase subunit N (531 aa).

Transmembrane regions (helical) follow at residues 8 to 28 (VEYF…AGVL), 41 to 61 (AQVT…IVVA), 81 to 101 (ATLF…VFMA), 146 to 166 (GATQ…MMVF), 172 to 192 (LLTM…MCGL), 208 to 228 (FLLG…LYGA), 250 to 270 (ALAG…AVPF), 282 to 302 (PTPI…GALL), 318 to 338 (PVLW…AVNQ), 350 to 370 (VAHV…GLSA), 372 to 392 (LFYL…VGLV), 418 to 438 (IVGV…LTSG), 453 to 473 (GAVP…YFYV), and 500 to 520 (AAIA…QPVL).

This sequence belongs to the complex I subunit 2 family. As to quaternary structure, NDH-1 is composed of 14 different subunits. Subunits NuoA, H, J, K, L, M, N constitute the membrane sector of the complex.

Its subcellular location is the cell membrane. It carries out the reaction a quinone + NADH + 5 H(+)(in) = a quinol + NAD(+) + 4 H(+)(out). NDH-1 shuttles electrons from NADH, via FMN and iron-sulfur (Fe-S) centers, to quinones in the respiratory chain. The immediate electron acceptor for the enzyme in this species is believed to be a menaquinone. Couples the redox reaction to proton translocation (for every two electrons transferred, four hydrogen ions are translocated across the cytoplasmic membrane), and thus conserves the redox energy in a proton gradient. This Mycobacterium bovis (strain ATCC BAA-935 / AF2122/97) protein is NADH-quinone oxidoreductase subunit N.